The following is a 58-amino-acid chain: Large ribosomal subunit protein eL24 (58 aa).

Cys6, Cys9, Cys32, and Cys36 together coordinate Zn(2+). The C4-type zinc finger occupies 6–36; sequence CAFCGADILPGYGIMYVKTDGTTLRFCSRKC.

This sequence belongs to the eukaryotic ribosomal protein eL24 family. Part of the 50S ribosomal subunit. Forms a cluster with proteins L3 and L14. The cofactor is Zn(2+).

Functionally, binds to the 23S rRNA. This Pyrobaculum islandicum (strain DSM 4184 / JCM 9189 / GEO3) protein is Large ribosomal subunit protein eL24.